Consider the following 1081-residue polypeptide: SPX and EXS domain-containing protein 4 (1081 aa).

Residues 1-483 (MKFRDLLNDH…RIISSECRKY (483 aa)) enclose the SPX domain. 3 disordered regions span residues 86 to 118 (ETAD…SVGF), 160 to 271 (QRNN…HDKN), and 318 to 354 (VKGD…DEDN). Low complexity-rich tracts occupy residues 90–110 (SPAI…NNNN), 161–196 (RNNN…TRNI), and 211–228 (SPFS…SPSP). The segment covering 244–264 (KDEDEEEEGEEEEDIEMEQLE) has biased composition (acidic residues). Positions 319-336 (KGDKSNDKNNDKSNDKNN) are enriched in basic and acidic residues. Residues 337–349 (NKNNKNNNNNNNL) show a composition bias toward low complexity. Transmembrane regions (helical) follow at residues 536–556 (NLFT…QVVF), 573–593 (LAWL…MFSL), 622–642 (YLKY…LYID), 654–674 (ILIP…PFPI), 703–723 (FFMS…QSMV), 776–796 (ITSA…YIAL), 803–823 (WSII…YKFY), 854–874 (WIYY…LIIF), and 887–907 (PLFL…FIFF). Residues 738–940 (FCSQSRFFAL…SQEYNNYMDE (203 aa)) enclose the EXS domain. The interval 939 to 1031 (DEKKKRRKRK…INDHMNPDTG (93 aa)) is disordered. The segment covering 942-951 (KKRRKRKQKQ) has biased composition (basic residues). Positions 952–970 (SKSNNNNNNNNNNNNNNNN) are enriched in low complexity. Over residues 977–1003 (SSNNVETDETITSSNNTDSSHQKQPLT) the composition is skewed to polar residues. The span at 1013–1022 (NHQDHHDLSI) shows a compositional bias: basic and acidic residues.

It belongs to the SYG1 (TC 2.A.94) family.

It localises to the membrane. In Dictyostelium discoideum (Social amoeba), this protein is SPX and EXS domain-containing protein 4.